We begin with the raw amino-acid sequence, 323 residues long: L-lactate dehydrogenase 1 (323 aa).

Residues V17, D38, R43, Y68, and 82 to 83 (GA) contribute to the NAD(+) site. Residues Q85 and R91 each contribute to the substrate site. NAD(+) contacts are provided by residues S104, 121-123 (AAN), and S146. 123–126 (NPVD) is a binding site for substrate. 151 to 154 (DTGR) is a binding site for substrate. The active-site Proton acceptor is H178. Y223 is subject to Phosphotyrosine. Position 232 (T232) interacts with substrate.

Belongs to the LDH/MDH superfamily. LDH family. In terms of assembly, homotetramer.

The protein resides in the cytoplasm. The catalysed reaction is (S)-lactate + NAD(+) = pyruvate + NADH + H(+). The protein operates within fermentation; pyruvate fermentation to lactate; (S)-lactate from pyruvate: step 1/1. Its function is as follows. Catalyzes the conversion of lactate to pyruvate. The protein is L-lactate dehydrogenase 1 of Lactobacillus johnsonii (strain CNCM I-12250 / La1 / NCC 533).